The following is a 539-amino-acid chain: Transcription factor prr1 (539 aa).

The DNA-binding element occupies 7-111; it reads SSDFVRKLFN…LLDNIKRKAP (105 aa). A Phosphothreonine modification is found at Thr-221. Position 223 is a phosphoserine (Ser-223). Residues 251–263 show a composition bias toward polar residues; the sequence is GTAQPSLYNTPSS. Positions 251-281 are disordered; sequence GTAQPSLYNTPSSDYELANQEKPADSMASAA. Residues 369–483 enclose the Response regulatory domain; sequence RILLVEDDEL…TLLQLLKKQL (115 aa). A 4-aspartylphosphate modification is found at Asp-418.

This sequence in the N-terminal section; belongs to the HSF family.

The protein resides in the nucleus. Functionally, involved in oxidative stress. Transcription factor that acts upon trr1 and ctt1. This chain is Transcription factor prr1 (prr1), found in Schizosaccharomyces pombe (strain 972 / ATCC 24843) (Fission yeast).